Reading from the N-terminus, the 363-residue chain is uncharacterized protein (363 aa).

The interval 35-262 (TVPGPPGAES…GLSPCCGDGG (228 aa)) is disordered. The segment covering 56–75 (AVSSSRNPNSAGRTPNSYLT) has biased composition (polar residues). The span at 100–116 (GADPALGSLPAAGLSGL) shows a compositional bias: low complexity.

This is an uncharacterized protein from Homo sapiens (Human).